Consider the following 177-residue polypeptide: Inorganic pyrophosphatase (177 aa).

K31, R45, and Y57 together coordinate substrate. 3 residues coordinate Mg(2+): D67, D72, and D104. Y141 serves as a coordination point for substrate.

It belongs to the PPase family. Homohexamer. Also forms homotrimers, but the trimeric form is 23% less active than the hexamer. In fact, likely forms a dimer of trimers. Mg(2+) serves as cofactor.

The protein localises to the cytoplasm. The catalysed reaction is diphosphate + H2O = 2 phosphate + H(+). With respect to regulation, inhibited by sodium fluoride (NaF) in vitro, similarly to other class A type inorganic pyrophosphatases. In terms of biological role, catalyzes the hydrolysis of inorganic pyrophosphate (PPi) forming two phosphate ions. The hydrolysis of PPi by inorganic pyrophosphatase releases a considerable amount of energy that can drive unfavorable biochemical transformations to completion. Is not active on nucleoside triphosphates (ATP, TTP, GTP, or CTP) or nucleoside diphosphate (ADP). In Haloferax volcanii (strain ATCC 29605 / DSM 3757 / JCM 8879 / NBRC 14742 / NCIMB 2012 / VKM B-1768 / DS2) (Halobacterium volcanii), this protein is Inorganic pyrophosphatase.